The following is a 136-amino-acid chain: ATP synthase epsilon chain (136 aa).

It belongs to the ATPase epsilon chain family. As to quaternary structure, F-type ATPases have 2 components, CF(1) - the catalytic core - and CF(0) - the membrane proton channel. CF(1) has five subunits: alpha(3), beta(3), gamma(1), delta(1), epsilon(1). CF(0) has three main subunits: a, b and c.

Its subcellular location is the cell membrane. In terms of biological role, produces ATP from ADP in the presence of a proton gradient across the membrane. This is ATP synthase epsilon chain from Macrococcus caseolyticus (strain JCSC5402) (Macrococcoides caseolyticum).